Reading from the N-terminus, the 424-residue chain is Insertion element IS2A uncharacterized 48.2 kDa protein (424 aa).

An Integrase catalytic domain is found at 229 to 412 (KPAVPPSKRA…SPREYLRHGA (184 aa)).

This sequence belongs to the transposase 8 family.

This chain is Insertion element IS2A uncharacterized 48.2 kDa protein, found in Escherichia coli.